Here is a 135-residue protein sequence, read N- to C-terminus: Early nodulin-5 (135 aa).

The N-terminal stretch at 1-23 (MASSSSPIFLMIIFSMWLLFSYS) is a signal peptide.

In terms of tissue distribution, invasion zone and early symbiotic zone.

Involved in the infection process during the plant-rhizobium interaction. This is Early nodulin-5 (ENOD5) from Pisum sativum (Garden pea).